The sequence spans 170 residues: Zinc finger A20 and AN1 domain-containing stress-associated protein 6 (170 aa).

Residues 10 to 44 (PESNRLCVNNCGFLGSSATMNLCSNCYGDLCLKQQ) form an A20-type zinc finger. Positions 16, 20, 32, and 35 each coordinate Zn(2+). The segment at 53 to 76 (TVESSLSVSPPSSSSSEISSPIIP) is disordered. An AN1-type zinc finger spans residues 105–151 (QQRPNRCTTCRKRVGLTGFKCRCGTMFCGVHRYPEIHGCSYDFKSAG). Residues Cys-111, Cys-114, Cys-125, Cys-127, Cys-132, His-135, His-141, and Cys-143 each coordinate Zn(2+).

May be involved in environmental stress response. The sequence is that of Zinc finger A20 and AN1 domain-containing stress-associated protein 6 (SAP6) from Arabidopsis thaliana (Mouse-ear cress).